The following is a 44-amino-acid chain: Antibacterial protein 3 (44 aa).

Met-1 is subject to N-formylmethionine.

Belongs to the staphylococcal hemolytic protein family.

It is found in the secreted. Its function is as follows. Has hemolytic activity and also inhibits the growth of gonococci. The polypeptide is Antibacterial protein 3 (Staphylococcus haemolyticus).